The primary structure comprises 447 residues: Phosphoglucosamine mutase (447 aa).

Serine 106 serves as the catalytic Phosphoserine intermediate. The Mg(2+) site is built by serine 106, aspartate 245, aspartate 247, and aspartate 249. Serine 106 is subject to Phosphoserine.

The protein belongs to the phosphohexose mutase family. Requires Mg(2+) as cofactor. Activated by phosphorylation.

The enzyme catalyses alpha-D-glucosamine 1-phosphate = D-glucosamine 6-phosphate. Its function is as follows. Catalyzes the conversion of glucosamine-6-phosphate to glucosamine-1-phosphate. In Cupriavidus pinatubonensis (strain JMP 134 / LMG 1197) (Cupriavidus necator (strain JMP 134)), this protein is Phosphoglucosamine mutase.